The sequence spans 131 residues: Ribosome-binding factor A (131 aa).

It belongs to the RbfA family. As to quaternary structure, monomer. Binds 30S ribosomal subunits, but not 50S ribosomal subunits or 70S ribosomes.

It localises to the cytoplasm. In terms of biological role, one of several proteins that assist in the late maturation steps of the functional core of the 30S ribosomal subunit. Associates with free 30S ribosomal subunits (but not with 30S subunits that are part of 70S ribosomes or polysomes). Required for efficient processing of 16S rRNA. May interact with the 5'-terminal helix region of 16S rRNA. In Vibrio vulnificus (strain CMCP6), this protein is Ribosome-binding factor A.